A 377-amino-acid chain; its full sequence is tRNA/tmRNA (uracil-C(5))-methyltransferase (377 aa).

S-adenosyl-L-methionine-binding residues include Q199, Y227, N232, E248, and D308. C333 (nucleophile) is an active-site residue. Catalysis depends on E367, which acts as the Proton acceptor.

Belongs to the class I-like SAM-binding methyltransferase superfamily. RNA M5U methyltransferase family. TrmA subfamily.

The catalysed reaction is uridine(54) in tRNA + S-adenosyl-L-methionine = 5-methyluridine(54) in tRNA + S-adenosyl-L-homocysteine + H(+). It carries out the reaction uridine(341) in tmRNA + S-adenosyl-L-methionine = 5-methyluridine(341) in tmRNA + S-adenosyl-L-homocysteine + H(+). Functionally, dual-specificity methyltransferase that catalyzes the formation of 5-methyluridine at position 54 (m5U54) in all tRNAs, and that of position 341 (m5U341) in tmRNA (transfer-mRNA). This is tRNA/tmRNA (uracil-C(5))-methyltransferase from Aeromonas hydrophila subsp. hydrophila (strain ATCC 7966 / DSM 30187 / BCRC 13018 / CCUG 14551 / JCM 1027 / KCTC 2358 / NCIMB 9240 / NCTC 8049).